Consider the following 536-residue polypeptide: Membrane protein insertase YidC (536 aa).

A helical transmembrane segment spans residues 5 to 25; sequence ALIAVILSIVFFYGYSALFPP. A disordered region spans residues 30 to 54; the sequence is APAPSAQQAVTGSQPGAPQASVAAV. Residues 31–54 show a composition bias toward low complexity; the sequence is PAPSAQQAVTGSQPGAPQASVAAV. 4 helical membrane-spanning segments follow: residues 350-370, 420-440, 454-474, and 494-514; these read YGIA…PLTH, LPML…MFSI, LAGK…MVIQ, and PVVF…YWLV.

It belongs to the OXA1/ALB3/YidC family. Type 1 subfamily. As to quaternary structure, interacts with the Sec translocase complex via SecD. Specifically interacts with transmembrane segments of nascent integral membrane proteins during membrane integration.

Its subcellular location is the cell inner membrane. In terms of biological role, required for the insertion and/or proper folding and/or complex formation of integral membrane proteins into the membrane. Involved in integration of membrane proteins that insert both dependently and independently of the Sec translocase complex, as well as at least some lipoproteins. Aids folding of multispanning membrane proteins. This Geobacter metallireducens (strain ATCC 53774 / DSM 7210 / GS-15) protein is Membrane protein insertase YidC.